Reading from the N-terminus, the 314-residue chain is Ketimine reductase mu-crystallin (314 aa).

R47 provides a ligand contact to 3,3',5-triiodo-L-thyronine. NADPH contacts are provided by S91, H92, R119, A144, V146, Q147, N168, R169, T170, N173, T205, and M206. E257 provides a ligand contact to 3,3',5-triiodo-L-thyronine. Position 292 (S292) interacts with NADPH.

Belongs to the ornithine cyclodeaminase/mu-crystallin family. In terms of assembly, homodimer. Binds the thyroid hormone triiodothyronine (T3); T3 binding inhibits enzymatic activity.

It localises to the cytoplasm. The enzyme catalyses L-pipecolate + NAD(+) = Delta(1)-piperideine-2-carboxylate + NADH + H(+). The catalysed reaction is L-pipecolate + NADP(+) = Delta(1)-piperideine-2-carboxylate + NADPH + H(+). It catalyses the reaction L-proline + NADP(+) = 1-pyrroline-2-carboxylate + NADPH + H(+). It carries out the reaction L-proline + NAD(+) = 1-pyrroline-2-carboxylate + NADH + H(+). The enzyme catalyses (3R)-1,4-thiomorpholine-3-carboxylate + NAD(+) = 3,4-dehydrothiomorpholine-3-carboxylate + NADH + 2 H(+). The catalysed reaction is (3R)-1,4-thiomorpholine-3-carboxylate + NADP(+) = 3,4-dehydrothiomorpholine-3-carboxylate + NADPH + 2 H(+). It catalyses the reaction (S)-cystathionine ketimine + NADH + 2 H(+) = (3R,5S)-2,3,5,6,7-pentahydro-1,4-thiazepine-3,5-dicarboxylate + NAD(+). It carries out the reaction (S)-cystathionine ketimine + NADPH + 2 H(+) = (3R,5S)-2,3,5,6,7-pentahydro-1,4-thiazepine-3,5-dicarboxylate + NADP(+). The enzyme catalyses (R)-lanthionine ketimine + NADPH + 2 H(+) = (3R,5R)-1,4-thiomorpholine-3,5-dicarboxylate + NADP(+). The catalysed reaction is Delta(2)-thiazoline-2-carboxylate + NADPH + 2 H(+) = L-thiazolidine-2-carboxylate + NADP(+). Functionally, catalyzes the NAD(P)H-dependent reduction of imine double bonds of a number of cyclic ketimine substrates, including sulfur-containing cyclic ketimines. Under physiological conditions, it efficiently catalyzes delta(1)-piperideine-2-carboxylate (P2C) and delta(1)-pyrroline-2-carboxylate (Pyr2C) reduction, suggesting a central role in lysine and glutamate metabolism. Additional substrates are (S)-cystathionine ketimine (CysK), 3,4-dehydrothiomorpholine-3-carboxylate (AECK), and (R)-lanthionine ketimine (LK) that is reduced at very low rate compared to other substrates. Also catalyzes the NAD(P)H-dependent reduction of delta(2)-thiazoline-2-carboxylate (T2C). This is Ketimine reductase mu-crystallin (CRYM) from Bos taurus (Bovine).